The sequence spans 938 residues: Translation initiation factor IF-2 (938 aa).

The tract at residues 55–322 (KAEASAAPAA…RKSKRARRQE (268 aa)) is disordered. Low complexity-rich tracts occupy residues 57-68 (EASAAPAAPAEK) and 77-117 (KKAA…AAAP). The span at 118-136 (KPGPKPAPVAEQPAPPAEP) shows a compositional bias: pro residues. Low complexity-rich tracts occupy residues 141–153 (APEA…APAA), 180–198 (GMGR…AGDN), and 224–233 (MMPKSPSAFG). Gly residues predominate over residues 247-293 (PGRGGAPGRGGAPGRGGVGTGAPGRGGAPGGGFGPSGGGRPGGGRPG). Residues 310–319 (RRGRKSKRAR) show a composition bias toward basic residues. Positions 431–603 (ARPPVVTVMG…VVLTADASLD (173 aa)) constitute a tr-type G domain. The interval 440 to 447 (GHVDHGKT) is G1. 440 to 447 (GHVDHGKT) is a binding site for GTP. Positions 465 to 469 (GITQH) are G2. A G3 region spans residues 490 to 493 (DTPG). GTP is bound by residues 490-494 (DTPGH) and 544-547 (NKID). Residues 544–547 (NKID) are G4. The G5 stretch occupies residues 580–582 (SAK).

It belongs to the TRAFAC class translation factor GTPase superfamily. Classic translation factor GTPase family. IF-2 subfamily.

It localises to the cytoplasm. One of the essential components for the initiation of protein synthesis. Protects formylmethionyl-tRNA from spontaneous hydrolysis and promotes its binding to the 30S ribosomal subunits. Also involved in the hydrolysis of GTP during the formation of the 70S ribosomal complex. This Nocardioides sp. (strain ATCC BAA-499 / JS614) protein is Translation initiation factor IF-2.